Here is a 519-residue protein sequence, read N- to C-terminus: 2-isopropylmalate synthase (519 aa).

Residues 5 to 267 (VIIFDTTLRD…YTNIHHHEIY (263 aa)) form the Pyruvate carboxyltransferase domain. Residues D14, H202, H204, and N238 each contribute to the Mn(2+) site. The interval 392–519 (ALESFHIHST…NHKNTQHIKK (128 aa)) is regulatory domain.

This sequence belongs to the alpha-IPM synthase/homocitrate synthase family. LeuA type 1 subfamily. As to quaternary structure, homodimer. Mn(2+) is required as a cofactor.

It localises to the cytoplasm. It catalyses the reaction 3-methyl-2-oxobutanoate + acetyl-CoA + H2O = (2S)-2-isopropylmalate + CoA + H(+). Its pathway is amino-acid biosynthesis; L-leucine biosynthesis; L-leucine from 3-methyl-2-oxobutanoate: step 1/4. Catalyzes the condensation of the acetyl group of acetyl-CoA with 3-methyl-2-oxobutanoate (2-ketoisovalerate) to form 3-carboxy-3-hydroxy-4-methylpentanoate (2-isopropylmalate). The sequence is that of 2-isopropylmalate synthase from Blochmanniella floridana.